Consider the following 144-residue polypeptide: Deoxyuridine 5'-triphosphate nucleotidohydrolase (144 aa).

Residues Ser-66, Arg-133, Phe-138, and Gly-139 each contribute to the dUMP site.

This sequence belongs to the dUTPase family. Homotrimer. The cofactor is Mg(2+).

The enzyme catalyses dUTP + H2O = dUMP + diphosphate + H(+). Its pathway is pyrimidine metabolism; dUMP biosynthesis; dUMP from dCTP (dUTP route): step 2/2. Involved in nucleotide metabolism via production of dUMP, the immediate precursor of thymidine nucleotides, and decreases the intracellular concentration of dUTP so that uracil cannot be incorporated into DNA. The polypeptide is Deoxyuridine 5'-triphosphate nucleotidohydrolase (DUT1) (Encephalitozoon cuniculi (strain GB-M1) (Microsporidian parasite)).